The chain runs to 460 residues: Cyclin-T1-2 (460 aa).

Disordered stretches follow at residues 1-20 and 285-345; these read MDEA…SSVA and QPIS…QDHS. Over residues 314 to 324 the composition is skewed to basic and acidic residues; the sequence is SDDHSVHDGSR. Residues 332–345 show a composition bias toward polar residues; it reads NSESEAQKNLQDHS.

The protein belongs to the cyclin family. Cyclin T subfamily.

The sequence is that of Cyclin-T1-2 (CYCT1-2) from Arabidopsis thaliana (Mouse-ear cress).